A 403-amino-acid polypeptide reads, in one-letter code: Phosphoglycerate kinase (403 aa).

Residues 22–24 (DLN), Arg37, 60–63 (HLGR), Arg119, and Arg156 contribute to the substrate site. ATP-binding positions include Lys206, Gly302, Glu333, and 359–362 (GGDS).

Belongs to the phosphoglycerate kinase family. Monomer.

The protein resides in the cytoplasm. It carries out the reaction (2R)-3-phosphoglycerate + ATP = (2R)-3-phospho-glyceroyl phosphate + ADP. It participates in carbohydrate degradation; glycolysis; pyruvate from D-glyceraldehyde 3-phosphate: step 2/5. The chain is Phosphoglycerate kinase from Streptomyces avermitilis (strain ATCC 31267 / DSM 46492 / JCM 5070 / NBRC 14893 / NCIMB 12804 / NRRL 8165 / MA-4680).